Reading from the N-terminus, the 308-residue chain is Protoheme IX farnesyltransferase (308 aa).

Transmembrane regions (helical) follow at residues 20-40, 50-70, 102-122, 124-144, 149-169, 170-190, 227-249, and 288-308; these read LLAYLALTKPRVIELLLVTAI, AIHPLLMLNTLVGGMMAATGA, NALALGLTLTVISFFWLWCAT, LLAGVLALVTVAFYVFVYTLW, TSQNVVWGGAAGCMPVMIGWS, AITGTIAWPALAMFAIIFFWT, LIYTWLTVAATLVLALATSWLYG, and YLAVVFCALAVDSVIALPTLH.

The protein belongs to the UbiA prenyltransferase family. Protoheme IX farnesyltransferase subfamily.

Its subcellular location is the cell membrane. The catalysed reaction is heme b + (2E,6E)-farnesyl diphosphate + H2O = Fe(II)-heme o + diphosphate. The protein operates within porphyrin-containing compound metabolism; heme O biosynthesis; heme O from protoheme: step 1/1. In terms of biological role, converts heme B (protoheme IX) to heme O by substitution of the vinyl group on carbon 2 of heme B porphyrin ring with a hydroxyethyl farnesyl side group. This chain is Protoheme IX farnesyltransferase, found in Mycobacterium bovis (strain BCG / Pasteur 1173P2).